The chain runs to 405 residues: MPEPVAEPALNGLRLNLRIVSIVMFNFASYLTIGLPLAVLPGYVHDVMGFSAFWAGLVISLQYFATLLSRPHAGRYADLLGPKKIVVFGLCGCFLSGLGYLTAGLTASLPVISLLLLCLGRVILGIGQSFAGTGSTLWGVGVVGSLHIGRVISWNGIVTYGAMAMGAPLGVVFYHWGGLQALALIIMGVALVAILLAIPRPTVKASKGKPLPFRAVLGRVWLYGMALALASAGFGVIATFITLFYDAKGWDGAAFALTLFSCAFVGTRLLFPNGINRIGGLNVAMICFSVEIIGLLLVGVATMPWMAKIGVLLAGAGFSLVFPALGVVAVKAVPQQNQGAALATYTVFMDLSLGVTGPLAGLVMSWAGVPVIYLAAAGLVAIALLLTWRLKKRPPEHVPEAASSS.

Helical transmembrane passes span 19 to 39, 47 to 67, 85 to 105, 107 to 127, 156 to 176, 178 to 198, 224 to 244, 252 to 272, 283 to 303, 309 to 329, 344 to 364, and 366 to 386; these read IVSI…PLAV, VMGF…FATL, IVVF…TAGL, ASLP…LGIG, GIVT…FYHW, GLQA…LLAI, GMAL…ITLF, GAAF…LLFP, VAMI…VATM, IGVL…GVVA, TYTV…GLVM, and WAGV…ALLL.

The protein belongs to the major facilitator superfamily. YhhS family.

Its subcellular location is the cell inner membrane. This is an uncharacterized protein from Shigella flexneri.